The sequence spans 410 residues: Putative nickel insertion protein (410 aa).

The protein belongs to the LarC family.

The polypeptide is Putative nickel insertion protein (Cyanothece sp. (strain PCC 7425 / ATCC 29141)).